An 88-amino-acid polypeptide reads, in one-letter code: Small ribosomal subunit protein bS20 (88 aa).

Residues 1 to 20 (MANTAQARKRARQAVVQNAH) form a disordered region.

The protein belongs to the bacterial ribosomal protein bS20 family.

Its function is as follows. Binds directly to 16S ribosomal RNA. The sequence is that of Small ribosomal subunit protein bS20 from Ralstonia pickettii (strain 12J).